Reading from the N-terminus, the 813-residue chain is Sorting nexin-29 (813 aa).

The RUN domain maps to 36–180; sequence SDSDSRVTCL…ILFAINIDNK (145 aa). Ser-268, Ser-291, Ser-292, Ser-330, and Ser-344 each carry phosphoserine. Positions 269-299 are disordered; sequence FDDEEDEQNSGDVFKKTPGAGESSEDNSDRS. A compositionally biased stretch (acidic residues) spans 346 to 357; that stretch reads DDEDVDENEDDV. The tract at residues 346 to 378 is disordered; the sequence is DDEDVDENEDDVYGNSSGRKHRGHSESPEKPLE. Phosphoserine is present on residues Ser-445 and Ser-450. Residues 466–545 are a coiled coil; the sequence is TISELRQATV…VLKVQLKKYV (80 aa). The residue at position 639 (Ser-639) is a Phosphoserine. Thr-641 carries the phosphothreonine modification. Residues Ser-642 and Ser-646 each carry the phosphoserine modification. Residues 656–779 form the PX domain; it reads ALINVWIPSV…PFFVDITPPG (124 aa). Residues 778 to 813 form a disordered region; it reads PGEPVNSRPKAASRFPKLSRGQPRETRNVEPQSGDL.

Belongs to the sorting nexin family.

This is Sorting nexin-29 (SNX29) from Homo sapiens (Human).